The sequence spans 46 residues: Endochitinase 1A (46 aa).

It belongs to the glycosyl hydrolase 19 family. Chitinase class I subfamily.

It carries out the reaction Random endo-hydrolysis of N-acetyl-beta-D-glucosaminide (1-&gt;4)-beta-linkages in chitin and chitodextrins.. Defense against chitin-containing fungal and bacterial pathogens. The chain is Endochitinase 1A from Arachis hypogaea (Peanut).